A 151-amino-acid chain; its full sequence is MTYKNILDKLVGKWIHQRTSYFIHNQQIDYHQEEIKLKQIDNIYISTKDNNSLYQYELSNKINNQKIYYIFSKQEESEFGKLHKITNDEIKYYRFTIHTHNCIKIESVRENISYNEYIYLINNRFKITISILKRGQKYLATSFISEIKIFN.

This sequence belongs to the CpcS/CpeS biliprotein lyase family.

Its subcellular location is the plastid. The protein localises to the chloroplast. Functionally, might function to covalently attach a chromophore to Cys residue(s) of phycobiliproteins. This is Chromophore lyase CpcS/CpeS homolog from Gracilaria tenuistipitata var. liui (Red alga).